We begin with the raw amino-acid sequence, 635 residues long: MVSIRLPDGSVRQYEHPVTVAEVAASIGPGLAKAALGGKIDGELVDTSALIDHDVALAIVTEKDADGLDIIRHSTAHLLAYAVKDLYPEAQVTIGPVIDNGFYYDFAYNRPFTPEDLEKIEKRMQELAKKDEPVSRRVVSRDEAVDYFKSIGEKYKAEIIESIPATDDIKLYSHGGFTDLCRGPHVPSTGKLKVFKLMKVAGAYWRGDSKNEQLQRIYGTAWTKKEDQEAYLHMLEEAEKRDHRKLGKQLDLFHMQDESPGMVFWHPRGWTLWQQVEQYMRRRVNDAGYLEIKTPMIMDRSLWEASGHWQNYRENMFTTESEKRDYAIKPMNCPGHVQVFNHGLRSYRDLPLRYAEFGSCHRNESSGALHGLMRVRGFVQDDAHIFCTEDQFISESIAFNTLAMSVYKDFGFDNVEIKLSLRPDARAGTDETWDRAEQGLREALTACGVTWEELPGEGAFYGPKVEYHIKDALGRSWQCGTLQLDMVLPERLGAEYVAEDNSRRRPIMLHRAIVGSMERFLGILIEHHAGAMPAWLAPMQVVVMNIAESQAEYAQSLAQSLQKQGVRVEADLRNEKISYKIREHTLEKVPYLLVVGDKEREAQTVAVRARGGVDLGVMPPDTFIERLRQDVQSFN.

The TGS domain maps to 1–61; sequence MVSIRLPDGS…DHDVALAIVT (61 aa). The catalytic stretch occupies residues 242–533; it reads DHRKLGKQLD…LIEHHAGAMP (292 aa). Positions 333, 384, and 510 each coordinate Zn(2+).

This sequence belongs to the class-II aminoacyl-tRNA synthetase family. In terms of assembly, homodimer. Zn(2+) is required as a cofactor.

The protein resides in the cytoplasm. The enzyme catalyses tRNA(Thr) + L-threonine + ATP = L-threonyl-tRNA(Thr) + AMP + diphosphate + H(+). Catalyzes the attachment of threonine to tRNA(Thr) in a two-step reaction: L-threonine is first activated by ATP to form Thr-AMP and then transferred to the acceptor end of tRNA(Thr). Also edits incorrectly charged L-seryl-tRNA(Thr). This chain is Threonine--tRNA ligase, found in Paraburkholderia phytofirmans (strain DSM 17436 / LMG 22146 / PsJN) (Burkholderia phytofirmans).